A 163-amino-acid polypeptide reads, in one-letter code: UPF0416 protein RBE_0909 (163 aa).

Belongs to the UPF0416 family.

This is UPF0416 protein RBE_0909 from Rickettsia bellii (strain RML369-C).